A 331-amino-acid polypeptide reads, in one-letter code: D-alanine--D-alanine ligase (331 aa).

The 201-residue stretch at 116–316 (KRQWQTHGLP…YEDFVLQLAA (201 aa)) folds into the ATP-grasp domain. 142–197 (ADRLGLPLIVKPAREGSSIGLTKVTSVAELPAAYEKAARLDRDVMAEQFIEGDELT) serves as a coordination point for ATP. Positions 269, 283, and 285 each coordinate Mg(2+).

The protein belongs to the D-alanine--D-alanine ligase family. Mg(2+) is required as a cofactor. The cofactor is Mn(2+).

Its subcellular location is the cytoplasm. It catalyses the reaction 2 D-alanine + ATP = D-alanyl-D-alanine + ADP + phosphate + H(+). It functions in the pathway cell wall biogenesis; peptidoglycan biosynthesis. Cell wall formation. In Ralstonia pickettii (strain 12J), this protein is D-alanine--D-alanine ligase.